A 240-amino-acid polypeptide reads, in one-letter code: Guanylate kinase (240 aa).

Residues 56-236 (GRIFVITGPS…TLNELKSILL (181 aa)) form the Guanylate kinase-like domain. 63-70 (GPSGVGKS) provides a ligand contact to ATP.

It belongs to the guanylate kinase family.

It is found in the cytoplasm. The catalysed reaction is GMP + ATP = GDP + ADP. Its function is as follows. Essential for recycling GMP and indirectly, cGMP. The polypeptide is Guanylate kinase (gmk) (Mycoplasma genitalium (strain ATCC 33530 / DSM 19775 / NCTC 10195 / G37) (Mycoplasmoides genitalium)).